We begin with the raw amino-acid sequence, 147 residues long: Hemoglobin subunit gamma (147 aa).

A Globin domain is found at 3–147 (NFTAEDKAAI…VASALASRYH (145 aa)). Heme b is bound by residues His-64 and His-93.

Belongs to the globin family. As to quaternary structure, heterotetramer of two alpha chains and two gamma chains in fetal hemoglobin (Hb F). As to expression, red blood cells.

Gamma chains make up the fetal hemoglobin F, in combination with alpha chains. This Lagothrix lagotricha (Brown woolly monkey) protein is Hemoglobin subunit gamma (HBG).